Here is a 380-residue protein sequence, read N- to C-terminus: Lipid-A-disaccharide synthase (380 aa).

Belongs to the LpxB family.

The catalysed reaction is a lipid X + a UDP-2-N,3-O-bis[(3R)-3-hydroxyacyl]-alpha-D-glucosamine = a lipid A disaccharide + UDP + H(+). The protein operates within bacterial outer membrane biogenesis; LPS lipid A biosynthesis. Functionally, condensation of UDP-2,3-diacylglucosamine and 2,3-diacylglucosamine-1-phosphate to form lipid A disaccharide, a precursor of lipid A, a phosphorylated glycolipid that anchors the lipopolysaccharide to the outer membrane of the cell. In Francisella tularensis subsp. novicida (strain U112), this protein is Lipid-A-disaccharide synthase.